The following is a 332-amino-acid chain: GTP 3',8-cyclase (332 aa).

A Radical SAM core domain is found at 7–221; the sequence is QYERLHDYVR…FDLCKQAGLD (215 aa). Residue Arg16 coordinates GTP. The [4Fe-4S] cluster site is built by Cys23 and Cys27. Residue Tyr29 coordinates S-adenosyl-L-methionine. Residue Cys30 participates in [4Fe-4S] cluster binding. Arg66 serves as a coordination point for GTP. Gly70 contributes to the S-adenosyl-L-methionine binding site. Thr97 contacts GTP. Ser121 contacts S-adenosyl-L-methionine. Residue Lys158 coordinates GTP. Residue Met192 coordinates S-adenosyl-L-methionine. [4Fe-4S] cluster contacts are provided by Cys256 and Cys259. 261 to 263 is a binding site for GTP; sequence RLR. A [4Fe-4S] cluster-binding site is contributed by Cys273.

It belongs to the radical SAM superfamily. MoaA family. In terms of assembly, monomer and homodimer. [4Fe-4S] cluster serves as cofactor.

The catalysed reaction is GTP + AH2 + S-adenosyl-L-methionine = (8S)-3',8-cyclo-7,8-dihydroguanosine 5'-triphosphate + 5'-deoxyadenosine + L-methionine + A + H(+). It functions in the pathway cofactor biosynthesis; molybdopterin biosynthesis. In terms of biological role, catalyzes the cyclization of GTP to (8S)-3',8-cyclo-7,8-dihydroguanosine 5'-triphosphate. The protein is GTP 3',8-cyclase of Limosilactobacillus fermentum (strain NBRC 3956 / LMG 18251) (Lactobacillus fermentum).